We begin with the raw amino-acid sequence, 181 residues long: Adenine phosphoribosyltransferase (181 aa).

Belongs to the purine/pyrimidine phosphoribosyltransferase family. As to quaternary structure, homodimer.

Its subcellular location is the cytoplasm. It catalyses the reaction AMP + diphosphate = 5-phospho-alpha-D-ribose 1-diphosphate + adenine. The protein operates within purine metabolism; AMP biosynthesis via salvage pathway; AMP from adenine: step 1/1. Catalyzes a salvage reaction resulting in the formation of AMP, that is energically less costly than de novo synthesis. The sequence is that of Adenine phosphoribosyltransferase from Mesorhizobium japonicum (strain LMG 29417 / CECT 9101 / MAFF 303099) (Mesorhizobium loti (strain MAFF 303099)).